Here is a 245-residue protein sequence, read N- to C-terminus: Ribonuclease PH (245 aa).

Residues Arg87 and 125-127 contribute to the phosphate site; that span reads GTR.

This sequence belongs to the RNase PH family. In terms of assembly, homohexameric ring arranged as a trimer of dimers.

The catalysed reaction is tRNA(n+1) + phosphate = tRNA(n) + a ribonucleoside 5'-diphosphate. In terms of biological role, phosphorolytic 3'-5' exoribonuclease that plays an important role in tRNA 3'-end maturation. Removes nucleotide residues following the 3'-CCA terminus of tRNAs; can also add nucleotides to the ends of RNA molecules by using nucleoside diphosphates as substrates, but this may not be physiologically important. Probably plays a role in initiation of 16S rRNA degradation (leading to ribosome degradation) during starvation. In Streptomyces coelicolor (strain ATCC BAA-471 / A3(2) / M145), this protein is Ribonuclease PH.